Consider the following 684-residue polypeptide: TBC1 domain family member 23 (684 aa).

The Rab-GAP TBC domain occupies 44–225 (PLPAELRAKV…AIWDGYLQQA (182 aa)). A Phosphoserine modification is found at Ser-300. The Rhodanese domain occupies 334–446 (EGVRFFVVDC…LQQHLADINV (113 aa)). Residues Ser-469, Ser-474, and Ser-507 each carry the phosphoserine modification. Thr-514 carries the post-translational modification Phosphothreonine. The may mediate the interaction with C17orf75, FAM91A1 and WDR11 stretch occupies residues 514-558 (TPVDRHVSSSDRVGKPYRGVKPVFSIGDEEEYDTDEIDSSSMSDD). Residues 514 to 684 (TPVDRHVSSS…IMKVLDALES (171 aa)) are may mediate the interaction with WASHC1. Phosphoserine is present on Ser-556. The may mediate the interaction with FKBP15 and WASHC2; required for endosome to Golgi trafficking stretch occupies residues 559-684 (DRKEVVNIQT…IMKVLDALES (126 aa)).

In terms of assembly, directly interacts with GOLGA1 and GOLGA4. Interacts with FAM91A1, C17ORF75 and WDR11; the interaction recruits TBC1D23 to AP-1-derived vesicles. Directly interacts with WASHC1 and WASHC2/FAM21. Interacts with FKBP15.

It localises to the golgi apparatus. Its subcellular location is the trans-Golgi network. The protein resides in the cytoplasmic vesicle. Functionally, putative Rab GTPase-activating protein which plays a role in vesicular trafficking. Involved in endosome-to-Golgi trafficking. Acts as a bridging protein by binding simultaneously to golgins, including GOLGA1 and GOLGA4, located at the trans-Golgi, and to the WASH complex, located on endosome-derived vesicles. Together with WDR11 complex facilitates the golgin-mediated capture of vesicles generated using AP-1. Plays a role in brain development, including in cortical neuron positioning. May also be important for neurite outgrowth, possibly through its involvement in membrane trafficking and cargo delivery, 2 processes which are essential for axonal and dendritic growth. May act as a general inhibitor of innate immunity signaling, strongly inhibiting multiple TLR and dectin/CLEC7A-signaling pathways. Does not alter initial activation events, but instead affects maintenance of inflammatory gene expression several hours after bacterial lipopolysaccharide (LPS) challenge. This chain is TBC1 domain family member 23 (Tbc1d23), found in Mus musculus (Mouse).